The sequence spans 151 residues: 16.9 kDa class I heat shock protein 1 (151 aa).

The region spanning 37-151 (ETAAFANARV…PEVKAIEISG (115 aa)) is the sHSP domain.

Belongs to the small heat shock protein (HSP20) family. In terms of assembly, may form oligomeric structures.

The protein localises to the cytoplasm. This chain is 16.9 kDa class I heat shock protein 1 (hsp16.9A), found in Triticum aestivum (Wheat).